Here is a 242-residue protein sequence, read N- to C-terminus: Biosynthetic peptidoglycan transglycosylase (242 aa).

A helical membrane pass occupies residues 12 to 31 (LLFWLMLASALLVLALRWLP).

This sequence belongs to the glycosyltransferase 51 family.

The protein resides in the cell inner membrane. The enzyme catalyses [GlcNAc-(1-&gt;4)-Mur2Ac(oyl-L-Ala-gamma-D-Glu-L-Lys-D-Ala-D-Ala)](n)-di-trans,octa-cis-undecaprenyl diphosphate + beta-D-GlcNAc-(1-&gt;4)-Mur2Ac(oyl-L-Ala-gamma-D-Glu-L-Lys-D-Ala-D-Ala)-di-trans,octa-cis-undecaprenyl diphosphate = [GlcNAc-(1-&gt;4)-Mur2Ac(oyl-L-Ala-gamma-D-Glu-L-Lys-D-Ala-D-Ala)](n+1)-di-trans,octa-cis-undecaprenyl diphosphate + di-trans,octa-cis-undecaprenyl diphosphate + H(+). It functions in the pathway cell wall biogenesis; peptidoglycan biosynthesis. Peptidoglycan polymerase that catalyzes glycan chain elongation from lipid-linked precursors. This Ectopseudomonas mendocina (strain ymp) (Pseudomonas mendocina) protein is Biosynthetic peptidoglycan transglycosylase.